The following is a 132-amino-acid chain: NLP effector protein 15 (132 aa).

The Conserved undecapeptide motif I motif lies at 1–9; the sequence is MYSWYFPKD. The Hepta-peptide GHRHDWE motif II signature appears at 16–22; sequence GHRHDWE.

Belongs to the Necrosis inducing protein (NPP1) family.

The protein resides in the secreted. Its function is as follows. Secreted effector that contributes moderately to virulence during infection by P.capsici. Causes only small yellow areas at 3 days after inoculation of host C.annuum leaves; these areas expand somewhat and became necrotic at 7 days after inoculation. Leads only to chlorotic areas, without necrosis at 7 days after non-host N.benthamiana leaves infection. The polypeptide is NLP effector protein 15 (Phytophthora capsici).